Here is a 643-residue protein sequence, read N- to C-terminus: Pesticidal crystal protein Cry11Aa (643 aa).

The protein belongs to the delta endotoxin family.

Functionally, promotes colloidosmotic lysis by binding to the midgut epithelial cells of mosquitos. This Bacillus thuringiensis subsp. israelensis protein is Pesticidal crystal protein Cry11Aa (cry11Aa).